The primary structure comprises 411 residues: Prophage integrase IntR (411 aa).

Positions 81–176 (KTFGELCDIW…LLCSLLRFAY (96 aa)) constitute a Core-binding (CB) domain. In terms of domain architecture, Tyr recombinase spans 197–404 (IKPDPLSKTE…IDDMNDEQIA (208 aa)). Active-site residues include arginine 231, lysine 266, arginine 358, and histidine 381. The active-site O-(3'-phospho-DNA)-tyrosine intermediate is tyrosine 391.

The protein belongs to the 'phage' integrase family.

Integrase is necessary for integration of the phage into the host genome by site-specific recombination. In conjunction with excisionase, integrase is also necessary for excision of the prophage from the host genome. In Escherichia coli (strain K12), this protein is Prophage integrase IntR (intR).